The chain runs to 81 residues: ATP synthase subunit c, chloroplastic (81 aa).

2 consecutive transmembrane segments (helical) span residues 7-27 and 57-77; these read AASVIAAGLAVGLASIGPGIG and LAFMEALTIYGLVVALALLFA.

The protein belongs to the ATPase C chain family. As to quaternary structure, F-type ATPases have 2 components, F(1) - the catalytic core - and F(0) - the membrane proton channel. F(1) has five subunits: alpha(3), beta(3), gamma(1), delta(1), epsilon(1). F(0) has four main subunits: a(1), b(1), b'(1) and c(10-14). The alpha and beta chains form an alternating ring which encloses part of the gamma chain. F(1) is attached to F(0) by a central stalk formed by the gamma and epsilon chains, while a peripheral stalk is formed by the delta, b and b' chains.

The protein resides in the plastid. It is found in the chloroplast thylakoid membrane. F(1)F(0) ATP synthase produces ATP from ADP in the presence of a proton or sodium gradient. F-type ATPases consist of two structural domains, F(1) containing the extramembraneous catalytic core and F(0) containing the membrane proton channel, linked together by a central stalk and a peripheral stalk. During catalysis, ATP synthesis in the catalytic domain of F(1) is coupled via a rotary mechanism of the central stalk subunits to proton translocation. Its function is as follows. Key component of the F(0) channel; it plays a direct role in translocation across the membrane. A homomeric c-ring of between 10-14 subunits forms the central stalk rotor element with the F(1) delta and epsilon subunits. The chain is ATP synthase subunit c, chloroplastic from Staurastrum punctulatum (Green alga).